A 599-amino-acid chain; its full sequence is Kelch-like protein 24a (599 aa).

A BTB domain is found at 65 to 132 (TDVIISVQGR…VYTGRACITT (68 aa)). Residues 167–269 (CLGIQRFADA…HPNYFVQTVE (103 aa)) form the BACK domain. Kelch repeat units follow at residues 313–362 (VIVV…ALRN), 364–406 (IILS…VLLG), 407–453 (KVYA…SCAG), 455–501 (LFVI…SLNH), 503–543 (IYVC…VCNG), and 545–591 (IYIL…TVHR).

As to quaternary structure, forms homodimers. Component of the BCR(KLHL24) E3 ubiquitin ligase complex.

The protein localises to the perikaryon. It localises to the cell projection. The protein resides in the axon. Its subcellular location is the cytoplasm. It is found in the cell junction. The protein localises to the desmosome. It localises to the adherens junction. Necessary to maintain the balance between intermediate filament stability and degradation, a process that is essential for skin integrity. Reduces kainate receptor-mediated currents in brain neurons, most probably by modulating channel properties. It is required for proper heart development. The polypeptide is Kelch-like protein 24a (Danio rerio (Zebrafish)).